The primary structure comprises 206 residues: Small ribosomal subunit protein uS4 (206 aa).

The S4 RNA-binding domain occupies 96-159 (TRLDNVVYRM…KKQARISASL (64 aa)).

This sequence belongs to the universal ribosomal protein uS4 family. Part of the 30S ribosomal subunit. Contacts protein S5. The interaction surface between S4 and S5 is involved in control of translational fidelity.

In terms of biological role, one of the primary rRNA binding proteins, it binds directly to 16S rRNA where it nucleates assembly of the body of the 30S subunit. Its function is as follows. With S5 and S12 plays an important role in translational accuracy. The chain is Small ribosomal subunit protein uS4 from Shewanella violacea.